Reading from the N-terminus, the 257-residue chain is Protein UL133 (257 aa).

2 helical membrane passes run 14 to 34 (WGVP…IWCL) and 45 to 65 (PGIA…AYLI). A disordered region spans residues 149-232 (PTVFVPPPSE…AMPQMPPGVA (84 aa)). Residues 164-175 (VIPPQPPTPTSE) are compositionally biased toward pro residues. A compositionally biased stretch (basic residues) spans 179–193 (KKGRAKDKPKGRPKN). Residues 214–228 (GGPPDASPPAMPQMP) are compositionally biased toward pro residues.

The protein resides in the host Golgi apparatus membrane. In Human cytomegalovirus (strain Merlin) (HHV-5), this protein is Protein UL133 (UL133).